We begin with the raw amino-acid sequence, 923 residues long: Glucosidase 2 subunit alpha (923 aa).

The signal sequence occupies residues 1–25; the sequence is MRYHGICWFIFQAAIIFAIFGSCQG. N-linked (GlcNAc...) asparagine glycosylation is present at Asn-262. Asp-524 (nucleophile) is an active-site residue. The active site involves Glu-527. An N-linked (GlcNAc...) asparagine glycan is attached at Asn-563. Asp-600 (proton donor) is an active-site residue. Asn-822 is a glycosylation site (N-linked (GlcNAc...) asparagine).

It belongs to the glycosyl hydrolase 31 family. Heterodimer of a catalytic subunit alpha (gls2) and a subunit beta (gtb1).

The protein resides in the endoplasmic reticulum. It carries out the reaction N(4)-(alpha-D-Glc-(1-&gt;3)-alpha-D-Man-(1-&gt;2)-alpha-D-Man-(1-&gt;2)-alpha-D-Man-(1-&gt;3)-[alpha-D-Man-(1-&gt;2)-alpha-D-Man-(1-&gt;3)-[alpha-D-Man-(1-&gt;2)-alpha-D-Man-(1-&gt;6)]-alpha-D-Man-(1-&gt;6)]-beta-D-Man-(1-&gt;4)-beta-D-GlcNAc-(1-&gt;4)-beta-D-GlcNAc)-L-asparaginyl-[protein] + H2O = N(4)-(alpha-D-Man-(1-&gt;2)-alpha-D-Man-(1-&gt;2)-alpha-D-Man-(1-&gt;3)-[alpha-D-Man-(1-&gt;2)-alpha-D-Man-(1-&gt;3)-[alpha-D-Man-(1-&gt;2)-alpha-D-Man-(1-&gt;6)]-alpha-D-Man-(1-&gt;6)]-beta-D-Man-(1-&gt;4)-beta-D-GlcNAc-(1-&gt;4)-beta-D-GlcNAc)-L-asparaginyl-[protein] (N-glucan mannose isomer 9A1,2,3B1,2,3) + beta-D-glucose. The enzyme catalyses N(4)-(alpha-D-Glc-(1-&gt;3)-alpha-D-Glc-(1-&gt;3)-alpha-D-Man-(1-&gt;2)-alpha-D-Man-(1-&gt;2)-alpha-D-Man-(1-&gt;3)-[alpha-D-Man-(1-&gt;2)-alpha-D-Man-(1-&gt;3)-[alpha-D-Man-(1-&gt;2)-alpha-D-Man-(1-&gt;6)]-alpha-D-Man-(1-&gt;6)]-beta-D-Man-(1-&gt;4)-beta-D-GlcNAc-(1-&gt;4)-beta-D-GlcNAc)-L-asparaginyl-[protein] + H2O = N(4)-(alpha-D-Glc-(1-&gt;3)-alpha-D-Man-(1-&gt;2)-alpha-D-Man-(1-&gt;2)-alpha-D-Man-(1-&gt;3)-[alpha-D-Man-(1-&gt;2)-alpha-D-Man-(1-&gt;3)-[alpha-D-Man-(1-&gt;2)-alpha-D-Man-(1-&gt;6)]-alpha-D-Man-(1-&gt;6)]-beta-D-Man-(1-&gt;4)-beta-D-GlcNAc-(1-&gt;4)-beta-D-GlcNAc)-L-asparaginyl-[protein] + beta-D-glucose. The protein operates within glycan metabolism; N-glycan metabolism. Catalytic subunit of glucosidase 2, which cleaves sequentially the 2 innermost alpha-1,3-linked glucose residues from the Glc(2)Man(9)GlcNAc(2) oligosaccharide precursor of immature glycoproteins. The protein is Glucosidase 2 subunit alpha of Schizosaccharomyces pombe (strain 972 / ATCC 24843) (Fission yeast).